A 291-amino-acid chain; its full sequence is MSDNHLQNSDKINRKGFFSILLNQIFHDEPKNREELLVLIRDSEQNELIDQDTCDMLEGVMHIAKKRIKEIMIPRTQMITLKLHHNLNECLDVIIESAHSRFPVMSNDNNYVEGFLIAKDLLPFMKQSANIFCIKNILRPAVVVPESKHVDRMLKEFRSKRNHMAIVIDEFGAVSGLVTIEDILELIVGEIEDEYDDEETLNIRKIQKSTFSIRALTEIKEFNETFNTNFSDEEVDTIGGLVMKEFGHLPSRGESINIDGYSFKISIADSRKVIQIHVTIPENKTPVLIEA.

2 CBS domains span residues 72–131 (MIPR…SANI) and 137–194 (ILRP…IEDE).

This sequence belongs to the UPF0053 family.

Plays a role in the transport of magnesium and cobalt ions. The sequence is that of Magnesium and cobalt efflux protein CorC (corC) from Buchnera aphidicola subsp. Acyrthosiphon pisum (strain APS) (Acyrthosiphon pisum symbiotic bacterium).